A 217-amino-acid chain; its full sequence is Adenylate kinase (217 aa).

Position 12 to 17 (Gly12 to Ser17) interacts with ATP. The tract at residues Ser32 to Val61 is NMP. AMP contacts are provided by residues Thr33, Arg38, Leu59–Val61, Gly87–Arg90, and Gln94. Positions Gly128–Asp165 are LID. An ATP-binding site is contributed by Arg129. The Zn(2+) site is built by Cys132 and Cys135. Ile138–Tyr139 is an ATP binding site. The Zn(2+) site is built by Cys152 and Asp155. Residues Arg162 and Arg173 each contribute to the AMP site. ATP is bound at residue Gln201.

It belongs to the adenylate kinase family. As to quaternary structure, monomer.

The protein resides in the cytoplasm. The catalysed reaction is AMP + ATP = 2 ADP. It functions in the pathway purine metabolism; AMP biosynthesis via salvage pathway; AMP from ADP: step 1/1. Its function is as follows. Catalyzes the reversible transfer of the terminal phosphate group between ATP and AMP. Plays an important role in cellular energy homeostasis and in adenine nucleotide metabolism. The polypeptide is Adenylate kinase (Acholeplasma laidlawii (strain PG-8A)).